We begin with the raw amino-acid sequence, 104 residues long: NADH-quinone oxidoreductase subunit K (104 aa).

The next 3 membrane-spanning stretches (helical) occupy residues 4–24 (VPAS…LFGA), 31–51 (VIVL…LVAF), and 67–87 (LFTM…LIAL).

The protein belongs to the complex I subunit 4L family. In terms of assembly, NDH-1 is composed of 14 different subunits. Subunits NuoA, H, J, K, L, M, N constitute the membrane sector of the complex.

It is found in the cell membrane. The catalysed reaction is a quinone + NADH + 5 H(+)(in) = a quinol + NAD(+) + 4 H(+)(out). NDH-1 shuttles electrons from NADH, via FMN and iron-sulfur (Fe-S) centers, to quinones in the respiratory chain. The immediate electron acceptor for the enzyme in this species is believed to be a menaquinone. Couples the redox reaction to proton translocation (for every two electrons transferred, four hydrogen ions are translocated across the cytoplasmic membrane), and thus conserves the redox energy in a proton gradient. This Bacillus cytotoxicus (strain DSM 22905 / CIP 110041 / 391-98 / NVH 391-98) protein is NADH-quinone oxidoreductase subunit K.